Here is a 158-residue protein sequence, read N- to C-terminus: MSETVVESFTLDHTKVKAPYVRVIETQSGPNGGTITNYDLRLTQPNETAIETGGLHTLEHLFAGLVRDEIDGIIDMSPFGCRTGFHVISWVNYDSETLAKVFKKVLEKIASDDITEVPAAEIESCGNYKDHSLHSAKEWAKLILAQGISSDAFERHVV.

The Fe cation site is built by His56, His60, and Cys125.

This sequence belongs to the LuxS family. In terms of assembly, homodimer. Fe cation serves as cofactor.

The enzyme catalyses S-(5-deoxy-D-ribos-5-yl)-L-homocysteine = (S)-4,5-dihydroxypentane-2,3-dione + L-homocysteine. Involved in the synthesis of autoinducer 2 (AI-2) which is secreted by bacteria and is used to communicate both the cell density and the metabolic potential of the environment. The regulation of gene expression in response to changes in cell density is called quorum sensing. Catalyzes the transformation of S-ribosylhomocysteine (RHC) to homocysteine (HC) and 4,5-dihydroxy-2,3-pentadione (DPD). The chain is S-ribosylhomocysteine lyase from Leuconostoc citreum (strain KM20).